We begin with the raw amino-acid sequence, 306 residues long: Ribonuclease Z (306 aa).

Positions 63, 65, 67, 68, 141, 211, and 269 each coordinate Zn(2+). The active-site Proton acceptor is Asp-67.

The protein belongs to the RNase Z family. In terms of assembly, homodimer. Requires Zn(2+) as cofactor.

It catalyses the reaction Endonucleolytic cleavage of RNA, removing extra 3' nucleotides from tRNA precursor, generating 3' termini of tRNAs. A 3'-hydroxy group is left at the tRNA terminus and a 5'-phosphoryl group is left at the trailer molecule.. In terms of biological role, zinc phosphodiesterase, which displays some tRNA 3'-processing endonuclease activity. Probably involved in tRNA maturation, by removing a 3'-trailer from precursor tRNA. The sequence is that of Ribonuclease Z from Staphylococcus aureus (strain MSSA476).